We begin with the raw amino-acid sequence, 152 residues long: Small ribosomal subunit protein uS15 (152 aa).

Positions 1–19 (MAKMHTRRKGRSRSTRPVR) are enriched in basic residues. Residues 1 to 21 (MAKMHTRRKGRSRSTRPVRKT) form a disordered region.

It belongs to the universal ribosomal protein uS15 family. As to quaternary structure, part of the 30S ribosomal subunit.

The polypeptide is Small ribosomal subunit protein uS15 (Methanocella arvoryzae (strain DSM 22066 / NBRC 105507 / MRE50)).